Here is a 70-residue protein sequence, read N- to C-terminus: Alpha-conotoxin EIIB (70 aa).

Residues 1–21 (MGMRMMFIVFLLVVLATTVVS) form the signal peptide. Positions 22 to 51 (FTLDHVLGLASEGRNAKAIDNALDQRDPKR) are excised as a propeptide. Q52 carries the post-translational modification Pyrrolidone carboxylic acid. P54 is subject to Hydroxyproline. Cystine bridges form between C56–C62 and C57–C67. Cysteine amide is present on C67.

Expressed by the venom duct.

It is found in the secreted. In terms of biological role, alpha-conotoxins bind to the nicotinic acetylcholine receptors (nAChR) and inhibit them. This peptide potently blocks muscular nicotinic acetylcholine receptor (CHRNA1-CHRNB1-CHRNG-CHRND), and has no effect on neuronal receptors. It is able to totally displace [125I]-Bgtx from the Torpedo receptor with an inhibition constant (Ki) of 2.2 and 0.7 nM. The chain is Alpha-conotoxin EIIB from Conus ermineus (Agate cone).